The following is a 269-amino-acid chain: Eukaryotic translation initiation factor 3 subunit G-1 (269 aa).

Positions 188–266 constitute an RRM domain; it reads AAIRISNLSE…LILSVEWSKP (79 aa).

It belongs to the eIF-3 subunit G family. In terms of assembly, component of the eukaryotic translation initiation factor 3 (eIF-3) complex. The eIF-3 complex interacts with pix.

The protein localises to the cytoplasm. In terms of biological role, RNA-binding component of the eukaryotic translation initiation factor 3 (eIF-3) complex, which is involved in protein synthesis of a specialized repertoire of mRNAs and, together with other initiation factors, stimulates binding of mRNA and methionyl-tRNAi to the 40S ribosome. The eIF-3 complex specifically targets and initiates translation of a subset of mRNAs involved in cell proliferation. This subunit can bind 18S rRNA. The chain is Eukaryotic translation initiation factor 3 subunit G-1 from Drosophila erecta (Fruit fly).